The primary structure comprises 99 residues: Seminal vesicle secretory protein 6 (99 aa).

Residues 1–21 form the signal peptide; it reads MSPTSFFLLTMLLVLVTETAA.

Belongs to the SVP2/SVP5/SVP6 family. As to expression, testis.

It is found in the secreted. It localises to the extracellular space. In Mus musculus (Mouse), this protein is Seminal vesicle secretory protein 6 (Svs6).